We begin with the raw amino-acid sequence, 256 residues long: Biosynthetic peptidoglycan transglycosylase (256 aa).

Residues 26 to 48 traverse the membrane as a helical segment; that stretch reads VARWLAYVGGVFAGAWLATQLYY.

It belongs to the glycosyltransferase 51 family.

It localises to the cell inner membrane. The enzyme catalyses [GlcNAc-(1-&gt;4)-Mur2Ac(oyl-L-Ala-gamma-D-Glu-L-Lys-D-Ala-D-Ala)](n)-di-trans,octa-cis-undecaprenyl diphosphate + beta-D-GlcNAc-(1-&gt;4)-Mur2Ac(oyl-L-Ala-gamma-D-Glu-L-Lys-D-Ala-D-Ala)-di-trans,octa-cis-undecaprenyl diphosphate = [GlcNAc-(1-&gt;4)-Mur2Ac(oyl-L-Ala-gamma-D-Glu-L-Lys-D-Ala-D-Ala)](n+1)-di-trans,octa-cis-undecaprenyl diphosphate + di-trans,octa-cis-undecaprenyl diphosphate + H(+). Its pathway is cell wall biogenesis; peptidoglycan biosynthesis. Peptidoglycan polymerase that catalyzes glycan chain elongation from lipid-linked precursors. The polypeptide is Biosynthetic peptidoglycan transglycosylase (Burkholderia pseudomallei (strain K96243)).